Consider the following 92-residue polypeptide: Putative membrane protein insertion efficiency factor (92 aa).

This sequence belongs to the UPF0161 family.

The protein resides in the cell inner membrane. Could be involved in insertion of integral membrane proteins into the membrane. In Synechococcus sp. (strain CC9902), this protein is Putative membrane protein insertion efficiency factor.